The primary structure comprises 230 residues: UPF0494 membrane protein C1348.07 (230 aa).

3 helical membrane passes run 78 to 98 (WPLL…NFEV), 120 to 140 (IWGP…GLIY), and 148 to 168 (AIPL…VAMV).

Belongs to the UPF0494 family.

The protein resides in the vacuole. Its subcellular location is the membrane. The sequence is that of UPF0494 membrane protein C1348.07 from Schizosaccharomyces pombe (strain 972 / ATCC 24843) (Fission yeast).